Reading from the N-terminus, the 156-residue chain is Small ribosomal subunit protein uS7 (156 aa).

The protein belongs to the universal ribosomal protein uS7 family. As to quaternary structure, part of the 30S ribosomal subunit. Contacts proteins S9 and S11.

In terms of biological role, one of the primary rRNA binding proteins, it binds directly to 16S rRNA where it nucleates assembly of the head domain of the 30S subunit. Is located at the subunit interface close to the decoding center, probably blocks exit of the E-site tRNA. The polypeptide is Small ribosomal subunit protein uS7 (Synechococcus sp. (strain RCC307)).